The chain runs to 104 residues: Nucleoid-associated protein DICTH_1981 (104 aa).

The tract at residues 85–104 is disordered; the sequence is KSAEKMGSLADGLPLPPGLF.

The protein belongs to the YbaB/EbfC family. As to quaternary structure, homodimer.

The protein resides in the cytoplasm. Its subcellular location is the nucleoid. Binds to DNA and alters its conformation. May be involved in regulation of gene expression, nucleoid organization and DNA protection. This chain is Nucleoid-associated protein DICTH_1981, found in Dictyoglomus thermophilum (strain ATCC 35947 / DSM 3960 / H-6-12).